A 479-amino-acid polypeptide reads, in one-letter code: Heparin cofactor 2 (479 aa).

An N-terminal signal peptide occupies residues methionine 1 to leucine 23. N-linked (GlcNAc...) asparagine glycosylation is present at asparagine 31. Repeat copies occupy residues glycine 55–glutamate 65 and serine 69–aspartate 79. Residues glycine 55–aspartate 79 form a 2 X 11 AA approximate repeats, Asp/Glu-rich (acidic) (hirudin-like) region. Sulfotyrosine occurs at positions 61 and 74. N-linked (GlcNAc...) asparagine glycosylation occurs at asparagine 168. Residues lysine 172–arginine 192 are glycosaminoglycan-binding site. N-linked (GlcNAc...) asparagine glycosylation is found at asparagine 367 and asparagine 403.

The protein belongs to the serpin family. In terms of processing, different composition of the N-linked oligosaccharides appears to yield a 68-kDa and a 72-kDa form.

Its function is as follows. Thrombin inhibitor activated by the glycosaminoglycans, heparin or dermatan sulfate. In the presence of the latter, HC-II becomes the predominant thrombin inhibitor in place of antithrombin III (AT). In Rattus norvegicus (Rat), this protein is Heparin cofactor 2 (Serpind1).